A 188-amino-acid chain; its full sequence is Ribosome-recycling factor (188 aa).

The protein belongs to the RRF family.

Its subcellular location is the cytoplasm. Functionally, responsible for the release of ribosomes from messenger RNA at the termination of protein biosynthesis. May increase the efficiency of translation by recycling ribosomes from one round of translation to another. In Phenylobacterium zucineum (strain HLK1), this protein is Ribosome-recycling factor.